We begin with the raw amino-acid sequence, 303 residues long: Glutaminase (303 aa).

S63, N113, E157, N164, Y188, Y239, and V257 together coordinate substrate.

It belongs to the glutaminase family. Homotetramer.

It catalyses the reaction L-glutamine + H2O = L-glutamate + NH4(+). The sequence is that of Glutaminase from Saccharopolyspora erythraea (strain ATCC 11635 / DSM 40517 / JCM 4748 / NBRC 13426 / NCIMB 8594 / NRRL 2338).